A 171-amino-acid chain; its full sequence is Cytochrome c-type biogenesis protein CcmE (171 aa).

At 1–7 (MNRKQKR) the chain is on the cytoplasmic side. Residues 8–28 (LAVIAGGMGFIAAAVLLVMFA) traverse the membrane as a helical; Signal-anchor for type II membrane protein segment. At 29–171 (FSQSVAYFYM…NPGEEAKATQ (143 aa)) the chain is on the periplasmic side. Heme contacts are provided by His-124 and Tyr-128. Residues 132–171 (DVADRLKQQGLWKEGQGGQESPGKEGQGQENPGEEAKATQ) are disordered.

Belongs to the CcmE/CycJ family.

It localises to the cell inner membrane. In terms of biological role, heme chaperone required for the biogenesis of c-type cytochromes. Transiently binds heme delivered by CcmC and transfers the heme to apo-cytochromes in a process facilitated by CcmF and CcmH. This chain is Cytochrome c-type biogenesis protein CcmE, found in Rhizobium leguminosarum bv. trifolii (strain WSM2304).